The sequence spans 267 residues: 5'-nucleotidase SurE (267 aa).

The a divalent metal cation site is built by Asp14, Asp15, Ser45, and Asn100.

It belongs to the SurE nucleotidase family. A divalent metal cation is required as a cofactor.

It localises to the cytoplasm. The catalysed reaction is a ribonucleoside 5'-phosphate + H2O = a ribonucleoside + phosphate. Functionally, nucleotidase that shows phosphatase activity on nucleoside 5'-monophosphates. This Methanosarcina barkeri (strain Fusaro / DSM 804) protein is 5'-nucleotidase SurE.